The primary structure comprises 261 residues: uncharacterized protein (261 aa).

A signal peptide spans 1–22 (MRYLKKVTIYISLLILTIFIGG). A lipid anchor (N-palmitoyl cysteine) is attached at Cys23. Cys23 carries S-diacylglycerol cysteine lipidation.

This sequence belongs to the staphylococcal tandem lipoprotein family.

It is found in the cell membrane. This is an uncharacterized protein from Staphylococcus epidermidis (strain ATCC 35984 / DSM 28319 / BCRC 17069 / CCUG 31568 / BM 3577 / RP62A).